A 697-amino-acid polypeptide reads, in one-letter code: Zinc finger and BTB domain-containing protein 24 (697 aa).

Residues 10–133 (GQLVVHSDAH…AYTDFQNNHS (124 aa)) form the BTB domain. The span at 131 to 142 (NHSSPKPTTLNT) shows a compositional bias: polar residues. Disordered regions lie at residues 131–176 (NHSS…EEKS) and 209–254 (EQIA…SRYS). Residues 159-171 (KRKRGRPKKVNTL) constitute a DNA-binding region (a.T hook). Positions 212–245 (AAKEKEESEPTCEPSREEEMPVEKDENYDPKTED) are enriched in basic and acidic residues. C2H2-type zinc fingers lie at residues 294–316 (ARCKDCGKVFKYNHFLAIHQRSH), 322–344 (FKCNECGKGFAQKHSLQVHTRMH), 350–372 (YTCTVCSKALTTKHSLLEHMSLH), 378–400 (FTCDQCGKYFSQNRQLKSHYRVH), 406–428 (PECKDCHRKFMDVSQLKKHLRTH), 434–456 (FTCEICGKSFTAKSSLQTHIRIH), 462–484 (YSCGICGKSFSDSSAKRRHCILH), and 490–512 (FSCPECNLQFARLDNLKAHLKIH). A disordered region spans residues 652–697 (QEQTEELHLATSTSDPAQHLQLTQEPGPPPPTHHVPQPTPLGQEQS). Residues 677–690 (PGPPPPTHHVPQPT) are compositionally biased toward pro residues.

This sequence belongs to the krueppel C2H2-type zinc-finger protein family. Interacts with MN1. Widely expressed, with highest levels in naive B-cells.

The protein localises to the nucleus. Its function is as follows. May be involved in BMP2-induced transcription. This chain is Zinc finger and BTB domain-containing protein 24 (ZBTB24), found in Homo sapiens (Human).